The primary structure comprises 148 residues: Hemoglobin subunit beta-1 (148 aa).

The 146-residue stretch at 3-148 (EWTDAERTAI…VVSALCRQYH (146 aa)) folds into the Globin domain. Heme b-binding residues include H64 and H93.

As to quaternary structure, heterotetramer of two alpha chains and two beta chains. As to expression, red blood cells.

In terms of biological role, involved in oxygen transport from gills to the various peripheral tissues. The chain is Hemoglobin subunit beta-1 (ba1) from Danio rerio (Zebrafish).